A 284-amino-acid polypeptide reads, in one-letter code: Polyamine aminopropyltransferase (284 aa).

Residues 2–237 (ELWYTEKHTE…GHWLFGFASK (236 aa)) enclose the PABS domain. Glutamine 31 contacts S-methyl-5'-thioadenosine. The spermidine site is built by histidine 62 and aspartate 86. S-methyl-5'-thioadenosine is bound by residues glutamate 106 and 137-138 (DG). The active-site Proton acceptor is aspartate 155. Residue 155–158 (DSTD) coordinates spermidine. An S-methyl-5'-thioadenosine-binding site is contributed by proline 162.

This sequence belongs to the spermidine/spermine synthase family. Homodimer or homotetramer.

The protein resides in the cytoplasm. It carries out the reaction S-adenosyl 3-(methylsulfanyl)propylamine + putrescine = S-methyl-5'-thioadenosine + spermidine + H(+). It participates in amine and polyamine biosynthesis; spermidine biosynthesis; spermidine from putrescine: step 1/1. Functionally, catalyzes the irreversible transfer of a propylamine group from the amino donor S-adenosylmethioninamine (decarboxy-AdoMet) to putrescine (1,4-diaminobutane) to yield spermidine. The chain is Polyamine aminopropyltransferase from Clostridium botulinum (strain Alaska E43 / Type E3).